The chain runs to 462 residues: Tubby-like F-box protein 7 (462 aa).

Residues 54 to 109 (SKWAGLPPELLRDVMKRLEEDDSNWPSRKDVVACASVCTTWRDMCKDIVRNPEFCG) enclose the F-box domain. Disordered stretches follow at residues 317-338 (FSEFGGGALQGQEQEQDGDDVN) and 383-418 (QPSSGAASEPSQAGQAAQQQTQPSQPSSSSSSSSSN). Positions 383–417 (QPSSGAASEPSQAGQAAQQQTQPSQPSSSSSSSSS) are enriched in low complexity.

Belongs to the TUB family. Ubiquitous.

The chain is Tubby-like F-box protein 7 (TULP7) from Oryza sativa subsp. japonica (Rice).